A 92-amino-acid polypeptide reads, in one-letter code: Promotilin (92 aa).

A disordered region spans residues 12-49 (RMQEKERNRGQKKSLGLQQRSEEVGSLDPTEAAEEEGK).

The protein belongs to the motilin family.

Its subcellular location is the secreted. Its function is as follows. Plays an important role in the regulation of interdigestive gastrointestinal motility and indirectly causes rhythmic contraction of duodenal and colonic smooth muscle. The polypeptide is Promotilin (MLN) (Equus caballus (Horse)).